We begin with the raw amino-acid sequence, 602 residues long: Trichothecene efflux pump TRI12 (602 aa).

The next 4 helical transmembrane spans lie at 49–69 (LTLLSTYFAFEASAAAISFII), 77–97 (NVSLFSTVWTVSQSISILLMG), 107–127 (GFILGTNCVGIIGGIGCLYSF), and 134–154 (IGAQVLLGLAAGQPGACILFI). N-linked (GlcNAc...) asparagine glycosylation occurs at N160. Helical transmembrane passes span 164-184 (FLGNVIVAFPNVIATGFGPYI), 196-216 (WIFYIYIIITAVSTVLAFIFY), 240-260 (WIGAFFLTAGMTLFLLGVSWG), 271-291 (ILGLLISGIVSCVIFVLYECY), 297-317 (PIIPMEFFPGTFAGFGCMLLI), 355-375 (STAGFGIWAGIVTLGSLFHIF), 380-400 (WQLIFGSAWVTAFLGAMASVN), 408-428 (IAFSICTGFVIGWAEDVTMLL), 450-470 (AICGSIFTAAFISLYTIKFPG), 484-504 (WGFPGVLLVAGFAYWRALTGQ), and 532-552 (AAAYSYVYYFAMALGVIAIIA). N590 carries N-linked (GlcNAc...) asparagine glycosylation.

This sequence belongs to the major facilitator superfamily.

The protein localises to the cell membrane. In terms of biological role, efflux pump that provides the dual role of trichothecene export and self-protection by allowing the fungus to evade the harmful effect of its own trichothecene production. The chain is Trichothecene efflux pump TRI12 from Trichoderma arundinaceum.